The chain runs to 258 residues: Snake venom serine protease KN12 (258 aa).

The first 18 residues, 1 to 18 (MVLIRVLANLLILQLSYA), serve as a signal peptide directing secretion. Positions 19–24 (QRSSEL) are excised as a propeptide. Positions 25–249 (VIGGDECNIN…HLDWIQNIIA (225 aa)) constitute a Peptidase S1 domain. Intrachain disulfides connect Cys-31–Cys-163, Cys-50–Cys-66, Cys-98–Cys-256, Cys-142–Cys-210, Cys-174–Cys-189, and Cys-200–Cys-225. His-65 (charge relay system) is an active-site residue. Asn-103 carries N-linked (GlcNAc...) asparagine glycosylation. The active-site Charge relay system is Asp-110. N-linked (GlcNAc...) asparagine glycans are attached at residues Asn-121, Asn-122, Asn-154, and Asn-170. Residue Ser-204 is the Charge relay system of the active site. Asn-251 carries N-linked (GlcNAc...) asparagine glycosylation.

Belongs to the peptidase S1 family. Snake venom subfamily. As to quaternary structure, monomer. In terms of tissue distribution, expressed by the venom gland.

It localises to the secreted. Functionally, snake venom serine protease that may act in the hemostasis system of the prey. In Trimeresurus stejnegeri (Chinese green tree viper), this protein is Snake venom serine protease KN12.